The sequence spans 530 residues: White collar 2 protein (530 aa).

7 consecutive repeat copies span residues 9–12, 21–24, 25–28, 29–32, 33–36, 37–40, and 41–44. A 7 X 4 AA repeats of G-[SAT]-G-M region spans residues 9–44; sequence GSSMYGFGAMGMGSGMGSGMGSGMGTGMGTGMGTGM. Residues 134–158 are disordered; that stretch reads IATPTTTTSGPSGGPSSGGGSTLTE. A compositionally biased stretch (gly residues) spans 144-154; the sequence is PSGGPSSGGGS. Residues 162–232 form the PAS domain; that stretch reads RRNWPAKVVE…AELNEAIATG (71 aa). The interval 315–343 is disordered; it reads REEQEEQEESHRTWRMSQEGRSDVTPSDD. A GATA-type zinc finger spans residues 468-493; the sequence is CTDCGTLDSPEWRKGPSGPKTLCNAC. The tract at residues 504–530 is disordered; that stretch reads KNANNNNNGGGIGGHNDIHTPMGDHMG.

Heterodimer of wc-1 and wc-2 (Potential). Binds to DNA.

It is found in the nucleus. In terms of biological role, may function as a transcription factor involved in light regulation. Binds and affects blue light regulation of the al-3 gene. Wc-1 and wc-2 interact via homologous PAS domains, bind to promoters of light regulated genes such as frq, and activate transcription. May bind directly to frq. The polypeptide is White collar 2 protein (wc-2) (Neurospora crassa (strain ATCC 24698 / 74-OR23-1A / CBS 708.71 / DSM 1257 / FGSC 987)).